The sequence spans 393 residues: Staphopain B (393 aa).

Positions 1–36 (MNSSCKTRVFNIISIIMVSMLILSLGAFANNNKAKA) are cleaved as a signal peptide. Residues 37 to 219 (DSHSKQLEIN…KVEENEAIQE (183 aa)) constitute a propeptide that is removed on maturation. Active-site residues include cysteine 243, histidine 340, and asparagine 360.

Belongs to the peptidase C47 family. In the cytoplasm, prematurely activated/folded SspB forms a stable non-covalent complex with SspC. Proteolytically cleaved by staphylococcal serine protease (SspA).

Its subcellular location is the secreted. Prematurely activated/folded staphopain B is inhibited by staphostatin B (SspC), which is probably required to protect staphylococcal cytoplasmic proteins from degradation by SspB. In terms of biological role, cysteine protease that plays an important role in the inhibition of host innate immune response. Degrades host elastin, fibrogen, fibronectin and kininogen. Blocks phagocytosis of opsonised S.aureus by neutrophils and monocytes by inducing their death in a proteolytic activity-dependent manner. Decreases surface expression of the 'don't eat me' signal CD31 on neutrophils. Cleaves host galectin-3/LGALS3, thereby inhibiting the neutrophil-activating ability of the lectin. The polypeptide is Staphopain B (sspB) (Staphylococcus aureus (strain MRSA252)).